A 330-amino-acid chain; its full sequence is ADP-L-glycero-D-manno-heptose-6-epimerase (330 aa).

Residues 11 to 12 (FI), 32 to 33 (DN), Lys-39, Lys-54, 75 to 79 (EGACS), and Asn-92 each bind NADP(+). Tyr-139 functions as the Proton acceptor in the catalytic mechanism. Lys-143 is an NADP(+) binding site. Asn-168 is a substrate binding site. Positions 169 and 177 each coordinate NADP(+). The active-site Proton acceptor is Lys-177. Residues Arg-179, His-186, 200–203 (FGEY), Arg-213, and Tyr-292 each bind substrate.

This sequence belongs to the NAD(P)-dependent epimerase/dehydratase family. HldD subfamily. In terms of assembly, homopentamer. NADP(+) serves as cofactor.

The catalysed reaction is ADP-D-glycero-beta-D-manno-heptose = ADP-L-glycero-beta-D-manno-heptose. It participates in nucleotide-sugar biosynthesis; ADP-L-glycero-beta-D-manno-heptose biosynthesis; ADP-L-glycero-beta-D-manno-heptose from D-glycero-beta-D-manno-heptose 7-phosphate: step 4/4. Functionally, catalyzes the interconversion between ADP-D-glycero-beta-D-manno-heptose and ADP-L-glycero-beta-D-manno-heptose via an epimerization at carbon 6 of the heptose. This is ADP-L-glycero-D-manno-heptose-6-epimerase from Burkholderia multivorans (strain ATCC 17616 / 249).